Reading from the N-terminus, the 684-residue chain is Protein-glutamine gamma-glutamyltransferase 4 (684 aa).

Catalysis depends on residues Cys-268, His-327, and Asp-350. Ca(2+) contacts are provided by Asn-390, Asp-392, Glu-442, and Glu-447.

The protein belongs to the transglutaminase superfamily. Transglutaminase family. Homodimer. Ca(2+) is required as a cofactor. In terms of tissue distribution, prostate.

The catalysed reaction is L-glutaminyl-[protein] + L-lysyl-[protein] = [protein]-L-lysyl-N(6)-5-L-glutamyl-[protein] + NH4(+). Functionally, associated with the mammalian reproductive process. Catalyzes the cross-linking of proteins and the conjugation of polyamines to specific proteins in the seminal tract. This Homo sapiens (Human) protein is Protein-glutamine gamma-glutamyltransferase 4 (TGM4).